We begin with the raw amino-acid sequence, 356 residues long: 1-acyl-sn-glycerol-3-phosphate acyltransferase LPAT1, chloroplastic (356 aa).

The N-terminal 56 residues, 1–56, are a transit peptide targeting the chloroplast; sequence MDVASARSISSHPSYYGKPICSSQSSLIRISRDKVCCFGRISNGMTSFTTSLHAVP. A helical membrane pass occupies residues 127–147; sequence GIFFCVVAGISATFLIVLMII. Positions 202–207 match the HXXXXD motif motif; the sequence is HQSFLD. The chain crosses the membrane as a helical span at residues 224-244; that stretch reads TGIFVIPIIGWAMSMMGVVPL.

This sequence belongs to the 1-acyl-sn-glycerol-3-phosphate acyltransferase family. In terms of tissue distribution, widely expressed. Expressed at higher level in leaves. Expressed at lower level in silique walls compared to leaves.

The protein localises to the plastid. It is found in the chloroplast membrane. It carries out the reaction a fatty acyl-[ACP] + a 1-acyl-sn-glycero-3-phosphate = a 1,2-diacyl-sn-glycero-3-phosphate + holo-[ACP]. The catalysed reaction is a 1-acyl-sn-glycero-3-phosphate + an acyl-CoA = a 1,2-diacyl-sn-glycero-3-phosphate + CoA. The protein operates within phospholipid metabolism; CDP-diacylglycerol biosynthesis; CDP-diacylglycerol from sn-glycerol 3-phosphate: step 2/3. In terms of biological role, plastidial enzyme of the prokaryotic glycerol-3-phosphate pathway that converts lysophosphatidic acid (LPA) into phosphatidic acid by incorporating an acyl moiety at position sn-2. Utilizes palmitoyl-ACP (16:0-ACP) to produce phosphatidic acid containing a saturated group at position sn-2, which is characteristic of lipids synthesized by the prokaryotic pathway. In vitro, can use 16:0-CoA as acyl donor. Essential for embryo development during the transition from the globular to the heart stage when chloroplasts begin to form. This Arabidopsis thaliana (Mouse-ear cress) protein is 1-acyl-sn-glycerol-3-phosphate acyltransferase LPAT1, chloroplastic.